The chain runs to 811 residues: Auxin response factor 8 (811 aa).

Positions 126 to 228 (FCKTLTASDT…QLFLGIRHAT (103 aa)) form a DNA-binding region, TF-B3. 2 disordered regions span residues 467–496 (HQYL…HLMH) and 544–565 (HLQQ…SDFT). Polar residues-rich tracts occupy residues 469-482 (YLQQ…DLML) and 544-555 (HLQQWQQQSEMP). Residues 705-789 (KNFVKVYKSG…WYIKILSPED (85 aa)) enclose the PB1 domain.

This sequence belongs to the ARF family. In terms of assembly, homodimers and heterodimers. In terms of tissue distribution, expressed in the whole plant.

It is found in the nucleus. Functionally, auxin response factors (ARFs) are transcriptional factors that bind specifically to the DNA sequence 5'-TGTCTC-3' found in the auxin-responsive promoter elements (AuxREs). Seems to act as transcriptional activator. Formation of heterodimers with Aux/IAA proteins may alter their ability to modulate early auxin response genes expression. Regulates both stamen and gynoecium maturation. Promotes jasmonic acid production. Partially redundant with ARF6. Involved in fruit initiation. Acts as an inhibitor to stop further carpel development in the absence of fertilization and the generation of signals required to initiate fruit and seed development. This chain is Auxin response factor 8 (ARF8), found in Arabidopsis thaliana (Mouse-ear cress).